The chain runs to 1010 residues: Contactin-1 (1010 aa).

A signal peptide spans 1 to 19; the sequence is MRFFISHLVTLCFIFCVAD. 6 consecutive Ig-like C2-type domains span residues 33–123, 132–215, 232–317, 322–398, 404–491, and 496–592; these read PVFE…ATLS, PEEH…KSVF, PADI…ARVY, PEWV…AELK, PTFE…GVLE, and TRIT…LVVR. 2 disulfides stabilise this stretch: C57–C106 and C150–C203. 2 N-linked (GlcNAc...) asparagine glycosylation sites follow: N200 and N249. C254 and C301 are oxidised to a cystine. Residue N329 is glycosylated (N-linked (GlcNAc...) asparagine). Cystine bridges form between C343/C382 and C427/C475. N-linked (GlcNAc...) asparagine glycans are attached at residues N448, N464, N485, and N512. An intrachain disulfide couples C517 to C574. N-linked (GlcNAc...) asparagine glycosylation occurs at N582. 4 Fibronectin type-III domains span residues 597–695, 700–797, 802–897, and 899–990; these read PPGG…TEGA, APSD…SAQD, VPTD…APPS, and RPRI…TAGV. Residues 679 to 689 are compositionally biased toward polar residues; it reads GTGEPSMPSQR. Residues 679-708 are disordered; sequence GTGEPSMPSQRIRTEGAPPNVAPSDVGGGG. N-linked (GlcNAc...) asparagine glycosylation occurs at N924. S984 carries GPI-anchor amidated serine lipidation. A propeptide spans 985 to 1010 (removed in mature form); that stretch reads GATAGVPTLLLGLVLPALGVLAYSGF.

The protein belongs to the immunoglobulin superfamily. Contactin family. Interacts with TNR.

Its subcellular location is the cell membrane. Mediates cell surface interactions during nervous system development. Interaction with TNR enhances the neurite outgrowth. The polypeptide is Contactin-1 (CNTN1) (Gallus gallus (Chicken)).